The following is a 172-amino-acid chain: Ribosome maturation factor RimM (172 aa).

One can recognise a PRC barrel domain in the interval 97–170; that stretch reads ENEFYFHEII…KITIEVMEGL (74 aa).

Belongs to the RimM family. As to quaternary structure, binds ribosomal protein uS19.

It is found in the cytoplasm. In terms of biological role, an accessory protein needed during the final step in the assembly of 30S ribosomal subunit, possibly for assembly of the head region. Essential for efficient processing of 16S rRNA. May be needed both before and after RbfA during the maturation of 16S rRNA. It has affinity for free ribosomal 30S subunits but not for 70S ribosomes. The sequence is that of Ribosome maturation factor RimM from Listeria innocua serovar 6a (strain ATCC BAA-680 / CLIP 11262).